Reading from the N-terminus, the 240-residue chain is Small ribosomal subunit protein uS3 (240 aa).

In terms of domain architecture, KH type-2 spans 39–109; that stretch reads IRQYVEKNLS…QIRINVVEVA (71 aa). The interval 214-240 is disordered; the sequence is EEQAPAQPATTPKRQRRRQQFEDRSNE.

It belongs to the universal ribosomal protein uS3 family. As to quaternary structure, part of the 30S ribosomal subunit. Forms a tight complex with proteins S10 and S14.

In terms of biological role, binds the lower part of the 30S subunit head. Binds mRNA in the 70S ribosome, positioning it for translation. The sequence is that of Small ribosomal subunit protein uS3 from Gloeothece citriformis (strain PCC 7424) (Cyanothece sp. (strain PCC 7424)).